The primary structure comprises 293 residues: 3-hydroxybutyrate-oligomer hydrolase (293 aa).

This sequence belongs to the AB hydrolase superfamily.

The protein localises to the cytoplasm. It catalyses the reaction (3R)-hydroxybutanoate pentamer + H2O = (3R)-hydroxybutanoate tetramer + (R)-3-hydroxybutanoate + H(+). It carries out the reaction (3R)-hydroxybutanoate tetramer + H2O = (3R)-hydroxybutanoate trimer + (R)-3-hydroxybutanoate + H(+). The enzyme catalyses (3R)-hydroxybutanoate trimer + H2O = (3R)-hydroxybutanoate dimer + (R)-3-hydroxybutanoate + H(+). The catalysed reaction is (3R)-hydroxybutanoate dimer + H2O = 2 (R)-3-hydroxybutanoate + H(+). It catalyses the reaction [(3R)-hydroxybutanoate](n) + H2O = [(3R)-hydroxybutanoate](n-1) + (R)-3-hydroxybutanoate + H(+). Functionally, catalyzes the degradation of various 3-hydroxybutyrate (3HB) oligomers at a high specific activity and artificial amorphous poly(3-hydroxybutyrate) (PHB) at a lower specific activity. Hydrolyzes the 3HB pentamer most efficiently than the tetramer, trimer and dimer. Does not hydrolyze native PHB granules and semicrystalline PHB. Participates in the mobilization of PHB along with other hydrolases. The polypeptide is 3-hydroxybutyrate-oligomer hydrolase (Cupriavidus necator (strain ATCC 17699 / DSM 428 / KCTC 22496 / NCIMB 10442 / H16 / Stanier 337) (Ralstonia eutropha)).